The primary structure comprises 159 residues: 2-C-methyl-D-erythritol 2,4-cyclodiphosphate synthase (159 aa).

The a divalent metal cation site is built by Asp10 and His12. 4-CDP-2-C-methyl-D-erythritol 2-phosphate contacts are provided by residues 10-12 and 36-37; these read DVH and HS. His44 provides a ligand contact to a divalent metal cation. Residues 58 to 60, 63 to 67, 102 to 108, 134 to 137, Phe141, 141 to 144, and Arg144 each bind 4-CDP-2-C-methyl-D-erythritol 2-phosphate; these read DIG, FPDTD, AQAPKMA, TTTE, and FTGR.

It belongs to the IspF family. As to quaternary structure, homotrimer. It depends on a divalent metal cation as a cofactor.

It catalyses the reaction 4-CDP-2-C-methyl-D-erythritol 2-phosphate = 2-C-methyl-D-erythritol 2,4-cyclic diphosphate + CMP. The protein operates within isoprenoid biosynthesis; isopentenyl diphosphate biosynthesis via DXP pathway; isopentenyl diphosphate from 1-deoxy-D-xylulose 5-phosphate: step 4/6. Involved in the biosynthesis of isopentenyl diphosphate (IPP) and dimethylallyl diphosphate (DMAPP), two major building blocks of isoprenoid compounds. Catalyzes the conversion of 4-diphosphocytidyl-2-C-methyl-D-erythritol 2-phosphate (CDP-ME2P) to 2-C-methyl-D-erythritol 2,4-cyclodiphosphate (ME-CPP) with a corresponding release of cytidine 5-monophosphate (CMP). The protein is 2-C-methyl-D-erythritol 2,4-cyclodiphosphate synthase of Shewanella oneidensis (strain ATCC 700550 / JCM 31522 / CIP 106686 / LMG 19005 / NCIMB 14063 / MR-1).